The sequence spans 575 residues: Malto-oligosyltrehalose trehalohydrolase (575 aa).

248–253 is a binding site for substrate; sequence RLDAVH. The active-site Nucleophile is the Asp250. Glu287 functions as the Proton donor in the catalytic mechanism. Substrate-binding positions include 312-316 and 381-386; these read DDVHH and HDQVGN.

This sequence belongs to the glycosyl hydrolase 13 family.

It is found in the cytoplasm. The enzyme catalyses hydrolysis of (1-&gt;4)-alpha-D-glucosidic linkage in 4-alpha-D-[(1-&gt;4)-alpha-D-glucanosyl]n trehalose to yield trehalose and (1-&gt;4)-alpha-D-glucan.. It functions in the pathway glycan biosynthesis; trehalose biosynthesis. This Arthrobacter ramosus protein is Malto-oligosyltrehalose trehalohydrolase (treZ).